Consider the following 159-residue polypeptide: Ribosomal RNA large subunit methyltransferase H (159 aa).

Residues leucine 76, glycine 108, and 127–132 each bind S-adenosyl-L-methionine; that span reads FGKLTM.

The protein belongs to the RNA methyltransferase RlmH family. In terms of assembly, homodimer.

The protein resides in the cytoplasm. It carries out the reaction pseudouridine(1915) in 23S rRNA + S-adenosyl-L-methionine = N(3)-methylpseudouridine(1915) in 23S rRNA + S-adenosyl-L-homocysteine + H(+). In terms of biological role, specifically methylates the pseudouridine at position 1915 (m3Psi1915) in 23S rRNA. This is Ribosomal RNA large subunit methyltransferase H from Lactobacillus delbrueckii subsp. bulgaricus (strain ATCC 11842 / DSM 20081 / BCRC 10696 / JCM 1002 / NBRC 13953 / NCIMB 11778 / NCTC 12712 / WDCM 00102 / Lb 14).